Here is a 941-residue protein sequence, read N- to C-terminus: UvrABC system protein A (941 aa).

37-44 (GLSGSGKS) contributes to the ATP binding site. The C4-type zinc finger occupies 260-287 (CFKCKMSFEELEPLSFSFNSPKGACESC). 2 consecutive ABC transporter domains span residues 316–585 (IFGY…NNHS) and 605–937 (KEKH…KFLA). ATP is bound at residue 637-644 (GVSGSGKS). The segment at 737–763 (CEKCQGDGDIKIEMHFLPDVLVQCDSC) adopts a C4-type zinc-finger fold.

This sequence belongs to the ABC transporter superfamily. UvrA family. Forms a heterotetramer with UvrB during the search for lesions.

It is found in the cytoplasm. Functionally, the UvrABC repair system catalyzes the recognition and processing of DNA lesions. UvrA is an ATPase and a DNA-binding protein. A damage recognition complex composed of 2 UvrA and 2 UvrB subunits scans DNA for abnormalities. When the presence of a lesion has been verified by UvrB, the UvrA molecules dissociate. The chain is UvrABC system protein A from Helicobacter pylori (strain J99 / ATCC 700824) (Campylobacter pylori J99).